Reading from the N-terminus, the 336-residue chain is GTP 3',8-cyclase (336 aa).

In terms of domain architecture, Radical SAM core spans 16–241; sequence AYRRTYYYLR…QSKGITDGPA (226 aa). Residue Arg25 coordinates GTP. The [4Fe-4S] cluster site is built by Cys32 and Cys36. Position 38 (Tyr38) interacts with S-adenosyl-L-methionine. [4Fe-4S] cluster is bound at residue Cys39. Arg75 serves as a coordination point for GTP. Gly79 provides a ligand contact to S-adenosyl-L-methionine. Position 106 (Thr106) interacts with GTP. Position 130 (Ser130) interacts with S-adenosyl-L-methionine. GTP is bound at residue Lys167. Position 201 (Met201) interacts with S-adenosyl-L-methionine. [4Fe-4S] cluster is bound by residues Cys264 and Cys267. 269–271 serves as a coordination point for GTP; the sequence is RLR. Cys281 serves as a coordination point for [4Fe-4S] cluster.

It belongs to the radical SAM superfamily. MoaA family. In terms of assembly, monomer and homodimer. [4Fe-4S] cluster serves as cofactor.

The enzyme catalyses GTP + AH2 + S-adenosyl-L-methionine = (8S)-3',8-cyclo-7,8-dihydroguanosine 5'-triphosphate + 5'-deoxyadenosine + L-methionine + A + H(+). It functions in the pathway cofactor biosynthesis; molybdopterin biosynthesis. Its function is as follows. Catalyzes the cyclization of GTP to (8S)-3',8-cyclo-7,8-dihydroguanosine 5'-triphosphate. This is GTP 3',8-cyclase from Actinobacillus succinogenes (strain ATCC 55618 / DSM 22257 / CCUG 43843 / 130Z).